The following is a 198-amino-acid chain: V-type ATP synthase subunit E (198 aa).

The protein belongs to the V-ATPase E subunit family.

Functionally, produces ATP from ADP in the presence of a proton gradient across the membrane. In Acetivibrio thermocellus (strain ATCC 27405 / DSM 1237 / JCM 9322 / NBRC 103400 / NCIMB 10682 / NRRL B-4536 / VPI 7372) (Clostridium thermocellum), this protein is V-type ATP synthase subunit E.